Here is a 420-residue protein sequence, read N- to C-terminus: Methanogen homoaconitase large subunit (420 aa).

3 residues coordinate [4Fe-4S] cluster: Cys302, Cys362, and Cys365.

It belongs to the aconitase/IPM isomerase family. LeuC type 2 subfamily. Heterotetramer of 2 HacA and 2 HacB proteins. [4Fe-4S] cluster is required as a cofactor.

It catalyses the reaction (2R)-homocitrate = (2R,3S)-homoisocitrate. The enzyme catalyses (2R)-homocitrate = cis-homoaconitate + H2O. The catalysed reaction is (2R,3S)-homoisocitrate = cis-homoaconitate + H2O. It carries out the reaction cis-(homo)2aconitate + H2O = (2R,3S)-iso(homo)2citrate. It catalyses the reaction cis-(homo)3aconitate + H2O = (2R,3S)-iso(homo)3citrate. The enzyme catalyses (R)-malate = maleate + H2O. The catalysed reaction is cis-aconitate + H2O = D-threo-isocitrate. The protein operates within organic acid metabolism; 2-oxosuberate biosynthesis. In terms of biological role, component of a hydro-lyase with broad substrate specificity for cis-unsaturated tricarboxylic acids. Catalyzes both the reversible dehydration of (R)-homocitrate ((R)-2-hydroxybutane-1,2,4-tricarboxylate) to produce cis-homoaconitate ((Z)-but-1-ene-1,2,4-tricarboxylate), and its hydration to homoisocitrate ((1R,2S)-1-hydroxybutane-1,2,4-tricarboxylate). Is also able to hydrate the analogous longer chain substrates cis-homo(2)-aconitate, cis-homo(3)-aconitate, and even the non-physiological cis-homo(4)-aconitate with similar efficiency. These reactions are part of the biosynthesis pathway of coenzyme B. Can also catalyze the hydration of maleate to (R)-malate, and that of cis-aconitate. Cannot catalyze the hydration of citraconate and the dehydration of (S)-homocitrate, citramalate, 2-isopropylmalate, 3-isopropylmalate, citrate or threo-DL-isocitrate. This is Methanogen homoaconitase large subunit (hacA) from Methanocaldococcus jannaschii (strain ATCC 43067 / DSM 2661 / JAL-1 / JCM 10045 / NBRC 100440) (Methanococcus jannaschii).